The sequence spans 702 residues: Dynein axonemal intermediate chain 1 (702 aa).

A disordered region spans residues 1–58 (MLPASSKMPHKQPPPPRKQSISMGRGARKRDEDSGTEVGEGTDEWVQSKATVKPPDQL). A phosphoserine mark is found at Ser134 and Ser137. WD repeat units follow at residues 383-423 (SSES…SQPS), 432-475 (KHTD…LVHT), 540-580 (AHNM…PMFI), 582-622 (DLNS…YEAI), and 630-669 (KKKN…RKMP).

It belongs to the dynein intermediate chain family. As to quaternary structure, consists of at least two heavy chains and a number of intermediate and light chains. Interacts with BICD2. Interacts with CFAP45 and CFAP52. Interacts with CFAP53.

The protein resides in the cytoplasm. The protein localises to the cytoskeleton. Its subcellular location is the cilium axoneme. Functionally, part of the dynein complex of respiratory cilia. The polypeptide is Dynein axonemal intermediate chain 1 (DNAI1) (Bos taurus (Bovine)).